Consider the following 73-residue polypeptide: UPF0499 protein NFIA_054990 (73 aa).

The N-terminal stretch at 1–20 (MKSFNLLSLSLLLAIASAAA) is a signal peptide. Disulfide bonds link Cys-46-Cys-60, Cys-50-Cys-63, and Cys-56-Cys-70.

It belongs to the UPF0499 family.

The protein resides in the secreted. This is UPF0499 protein NFIA_054990 from Neosartorya fischeri (strain ATCC 1020 / DSM 3700 / CBS 544.65 / FGSC A1164 / JCM 1740 / NRRL 181 / WB 181) (Aspergillus fischerianus).